We begin with the raw amino-acid sequence, 440 residues long: D-serine dehydratase (440 aa).

Lys-116 carries the N6-(pyridoxal phosphate)lysine modification.

Belongs to the serine/threonine dehydratase family. DsdA subfamily. In terms of assembly, monomer. Pyridoxal 5'-phosphate serves as cofactor.

The enzyme catalyses D-serine = pyruvate + NH4(+). The polypeptide is D-serine dehydratase (Salmonella schwarzengrund (strain CVM19633)).